We begin with the raw amino-acid sequence, 503 residues long: Maturase K (503 aa).

The protein belongs to the intron maturase 2 family. MatK subfamily.

Its subcellular location is the plastid. It is found in the chloroplast. Functionally, usually encoded in the trnK tRNA gene intron. Probably assists in splicing its own and other chloroplast group II introns. This Eucalyptus globulus (Tasmanian blue gum) protein is Maturase K.